The following is a 582-amino-acid chain: Aspartate--tRNA ligase (582 aa).

Glu174 lines the L-aspartate pocket. Residues 198–201 (QITK) form an aspartate region. Arg220 serves as a coordination point for L-aspartate. Residues 220-222 (RDE) and Gln229 each bind ATP. His443 is an L-aspartate binding site. An ATP-binding site is contributed by Glu477. L-aspartate is bound at residue Arg484. 529 to 532 (GLDR) is an ATP binding site.

Belongs to the class-II aminoacyl-tRNA synthetase family. Type 1 subfamily. In terms of assembly, homodimer.

Its subcellular location is the cytoplasm. The catalysed reaction is tRNA(Asp) + L-aspartate + ATP = L-aspartyl-tRNA(Asp) + AMP + diphosphate. Its function is as follows. Catalyzes the attachment of L-aspartate to tRNA(Asp) in a two-step reaction: L-aspartate is first activated by ATP to form Asp-AMP and then transferred to the acceptor end of tRNA(Asp). This is Aspartate--tRNA ligase from Streptococcus pyogenes serotype M18 (strain MGAS8232).